A 198-amino-acid polypeptide reads, in one-letter code: Glycerol-3-phosphate acyltransferase 1 (198 aa).

Helical transmembrane passes span 5-25 (ALLALLLSYLIGAIPAAAWLA), 52-72 (GPALLVASFDILKGVLAVLLA), 81-101 (WAALCGVLAVIGHNFSPFLAF), 111-131 (FGVIAILDPVLGLTTFVLAIA), and 138-158 (FVSAGSIMGAFIAGALVLVLP).

It belongs to the PlsY family. As to quaternary structure, probably interacts with PlsX.

It is found in the cell membrane. The catalysed reaction is an acyl phosphate + sn-glycerol 3-phosphate = a 1-acyl-sn-glycero-3-phosphate + phosphate. It participates in lipid metabolism; phospholipid metabolism. Its function is as follows. Catalyzes the transfer of an acyl group from acyl-phosphate (acyl-PO(4)) to glycerol-3-phosphate (G3P) to form lysophosphatidic acid (LPA). This enzyme utilizes acyl-phosphate as fatty acyl donor, but not acyl-CoA or acyl-ACP. This chain is Glycerol-3-phosphate acyltransferase 1, found in Deinococcus radiodurans (strain ATCC 13939 / DSM 20539 / JCM 16871 / CCUG 27074 / LMG 4051 / NBRC 15346 / NCIMB 9279 / VKM B-1422 / R1).